Here is a 278-residue protein sequence, read N- to C-terminus: Serine protease 57 (278 aa).

A signal peptide spans 1 to 31; sequence MVPGTGGGRDCLTLVVATALTQLLWLPGCCG. A Peptidase S1 domain is found at 34-263; sequence IVGGHEVKPH…FVSWIWDVVR (230 aa). An intrachain disulfide couples Cys-59 to Cys-75. Residues His-74 and Asp-122 each act as charge relay system in the active site. Asn-129 carries an N-linked (GlcNAc...) asparagine glycan. 3 disulfides stabilise this stretch: Cys-157-Cys-224, Cys-188-Cys-202, and Cys-214-Cys-239. Residue Ser-218 is the Charge relay system of the active site.

The protein belongs to the peptidase S1 family. In terms of processing, after cleavage of the signal peptide, the N-terminus is probably further processed by CTSC. Processing by CTSC is probably required for accumulation in cytoplasmic granules; in the absence of CTSC the protein does not accumulate. N-glycosylated.

Its subcellular location is the cytoplasmic granule lumen. The protein localises to the secreted. In terms of biological role, serine protease that cleaves preferentially after Arg residues. Can also cleave after citrulline (deimidated arginine) and methylarginine residues. The polypeptide is Serine protease 57 (Prss57) (Rattus norvegicus (Rat)).